The primary structure comprises 164 residues: Ribonuclease H (164 aa).

The RNase H type-1 domain occupies 9 to 150 (DMPRVTIYTD…ADTLANAATD (142 aa)). Mg(2+)-binding residues include Asp-18, Glu-56, Asp-78, and Asp-142.

It belongs to the RNase H family. As to quaternary structure, monomer. Mg(2+) serves as cofactor.

Its subcellular location is the cytoplasm. The enzyme catalyses Endonucleolytic cleavage to 5'-phosphomonoester.. Functionally, endonuclease that specifically degrades the RNA of RNA-DNA hybrids. The polypeptide is Ribonuclease H (Chromohalobacter salexigens (strain ATCC BAA-138 / DSM 3043 / CIP 106854 / NCIMB 13768 / 1H11)).